A 203-amino-acid chain; its full sequence is MSLTLLTLAMILTAYLAGSISSAVLVCRLRGLPDPRSQGSGNPGATNVLRIGGASAAAMVLLFDMLKGAVPAYVAFRLGVDAVSLGVIAIAACLGHIFPIFFKFKGGKGVATAFGAMAPIGADLSLALIATWVIVVLICRYSSLAAIVTALLAPAYTWYFDERFTVPVAMLSLLIIIRHKENIHRLLKGEESKVSRKKRTDGN.

5 helical membrane passes run 6-26 (LTLAMILTAYLAGSISSAVLV), 56-76 (AAAMVLLFDMLKGAVPAYVAF), 82-102 (AVSLGVIAIAACLGHIFPIFF), 118-138 (APIGADLSLALIATWVIVVLI), and 141-161 (YSSLAAIVTALLAPAYTWYFD).

The protein belongs to the PlsY family. In terms of assembly, probably interacts with PlsX.

The protein resides in the cell inner membrane. It catalyses the reaction an acyl phosphate + sn-glycerol 3-phosphate = a 1-acyl-sn-glycero-3-phosphate + phosphate. It functions in the pathway lipid metabolism; phospholipid metabolism. In terms of biological role, catalyzes the transfer of an acyl group from acyl-phosphate (acyl-PO(4)) to glycerol-3-phosphate (G3P) to form lysophosphatidic acid (LPA). This enzyme utilizes acyl-phosphate as fatty acyl donor, but not acyl-CoA or acyl-ACP. In Shewanella loihica (strain ATCC BAA-1088 / PV-4), this protein is Glycerol-3-phosphate acyltransferase.